The primary structure comprises 212 residues: U8 snoRNA-decapping enzyme (212 aa).

A disordered region spans residues 1 to 23 (MAESRSPDRGAKEDKPRPRNISR). Positions 37, 63, and 70 each coordinate substrate. Positions 39–187 (LLHAPSQAKL…IGNSKSQLLY (149 aa)) constitute a Nudix hydrolase domain. 4 residues coordinate Mn(2+): glycine 72, glutamate 89, glutamate 93, and glutamate 150. Residues 74-95 (FVDTRDISLEEGLKRELEEELG) carry the Nudix box motif. Positions 180 and 184 each coordinate substrate.

The protein belongs to the Nudix hydrolase family. NUDT16 subfamily. Homodimer. Mg(2+) serves as cofactor. It depends on Mn(2+) as a cofactor. The cofactor is Co(2+). In terms of tissue distribution, detected in ovary, and at very low levels in epithelial cells (at protein level).

It is found in the nucleus. The protein localises to the nucleolus. Its subcellular location is the nucleoplasm. The protein resides in the cytoplasm. It carries out the reaction a 5'-end (N(7)-methyl 5'-triphosphoguanosine)-ribonucleoside in mRNA + H2O = N(7)-methyl-GDP + a 5'-end phospho-ribonucleoside in mRNA + 2 H(+). The enzyme catalyses IDP + H2O = IMP + phosphate + H(+). The catalysed reaction is dIDP + H2O = dIMP + phosphate + H(+). It catalyses the reaction a 5'-end NAD(+)-phospho-ribonucleoside in mRNA + H2O = a 5'-end phospho-ribonucleoside in mRNA + NAD(+) + H(+). It carries out the reaction a 5'-end FAD-phospho-ribonucleoside in mRNA + H2O = a 5'-end phospho-adenosine-phospho-ribonucleoside in mRNA + FMN + 2 H(+). The enzyme catalyses a 5'-end CoA-ribonucleoside in mRNA + H2O = a 5'-end phospho-adenosine-phospho-ribonucleoside in mRNA + (R)-4'-phosphopantetheine + 2 H(+). Functionally, RNA-binding and decapping enzyme that catalyzes the cleavage of the cap structure of snoRNAs and mRNAs in a metal-dependent manner. Part of the U8 snoRNP complex that is required for the accumulation of mature 5.8S and 28S rRNA. Has diphosphatase activity and removes m7G and/or m227G caps from U8 snoRNA and leaves a 5'monophosphate on the RNA. Also catalyzes the cleavage of the cap structure on mRNAs. Does not hydrolyze cap analog structures like 7-methylguanosine nucleoside triphosphate (m7GpppG). Also hydrolysis m7G- and m227G U3-capped RNAs but with less efficiencies. Has broad substrate specificity with manganese or cobalt as cofactor and can act on various RNA species. Binds to the U8 snoRNA; metal is not required for RNA-binding. May play a role in the regulation of snoRNAs and mRNAs degradation. Also acts as a phosphatase; hydrolyzes the non-canonical purine nucleotides inosine diphosphate (IDP) and deoxyinosine diphosphate (dITP) as well as guanosine diphosphate (GDP), deoxyguanosine diphosphate (dGDP), xanthine diphosphate (XDP), inosine triphosphate (ITP) and deoxyinosine triphosphate (ITP) to their respective monophosphate derivatives and does not distinguish between the deoxy- and ribose forms. The order of activity with different substrates is IDP &gt; dIDP &gt;&gt; GDP = dGDP &gt; XDP = ITP = dITP. Binds strongly to GTP, ITP and XTP. Participates in the hydrolysis of dIDP/IDP and probably excludes non-canonical purines from RNA and DNA precursor pools, thus preventing their incorporation into RNA and DNA and avoiding chromosomal lesions. Exhibits decapping activity towards NAD-capped RNAs and FAD-capped RNAs. Exhibits decapping activity towards dpCoA-capped RNAs in vitro. This is U8 snoRNA-decapping enzyme (nudt16) from Xenopus laevis (African clawed frog).